The primary structure comprises 94 residues: Cell division topological specificity factor (94 aa).

The protein belongs to the MinE family.

Prevents the cell division inhibition by proteins MinC and MinD at internal division sites while permitting inhibition at polar sites. This ensures cell division at the proper site by restricting the formation of a division septum at the midpoint of the long axis of the cell. The chain is Cell division topological specificity factor from Acetivibrio thermocellus (strain ATCC 27405 / DSM 1237 / JCM 9322 / NBRC 103400 / NCIMB 10682 / NRRL B-4536 / VPI 7372) (Clostridium thermocellum).